The sequence spans 159 residues: SsrA-binding protein (159 aa).

Belongs to the SmpB family.

It localises to the cytoplasm. In terms of biological role, required for rescue of stalled ribosomes mediated by trans-translation. Binds to transfer-messenger RNA (tmRNA), required for stable association of tmRNA with ribosomes. tmRNA and SmpB together mimic tRNA shape, replacing the anticodon stem-loop with SmpB. tmRNA is encoded by the ssrA gene; the 2 termini fold to resemble tRNA(Ala) and it encodes a 'tag peptide', a short internal open reading frame. During trans-translation Ala-aminoacylated tmRNA acts like a tRNA, entering the A-site of stalled ribosomes, displacing the stalled mRNA. The ribosome then switches to translate the ORF on the tmRNA; the nascent peptide is terminated with the 'tag peptide' encoded by the tmRNA and targeted for degradation. The ribosome is freed to recommence translation, which seems to be the essential function of trans-translation. The protein is SsrA-binding protein of Coxiella burnetii (strain CbuK_Q154) (Coxiella burnetii (strain Q154)).